Reading from the N-terminus, the 545-residue chain is Tripartite motif-containing protein 55 (545 aa).

The RING-type zinc-finger motif lies at 26 to 82 (CPICLEMFTKPVVILPCQHNLCRKCASDIFQASNPYLPTRGGTTVASGGRFRCPSCR). A B box-type zinc finger spans residues 119 to 161 (LDQPMCEEHEEERINIYCLNCEVPTCSLCKVFGAHKDCQVAPL). The Zn(2+) site is built by Cys-124, His-127, Cys-147, and His-153. The stretch at 219 to 258 (YSILEERKTEMTQAITRTQEEKLEHVRTLIRKYSDHLENV) forms a coiled coil. A COS domain is found at 269 to 327 (MDEPEMAVFLQNAKTLLQKITEASKAFQMEKIEQGYEIMNNFTVNLNREEKIIREIDFS). Disordered stretches follow at residues 324–378 (IDFS…SELA) and 406–528 (LVTQ…GADS). Acidic residues predominate over residues 328–355 (REEEDEDDEGEVDEEGEGEDAVEVEEAE). 2 stretches are compositionally biased toward low complexity: residues 417 to 426 (SQQTTQSETS) and 469 to 493 (SAAE…AAVS). Over residues 495–506 (KESSSTAATSQI) the composition is skewed to polar residues. Residues 510 to 520 (ASSPQGQAAAL) are compositionally biased toward low complexity.

Homooligomer and heterooligomer. Interacts with titin/TTN. Interacts with myosins. Interacts with SQSTM1 and NBR1. Probably interacts with TRIM63 and TRIM54. Post-translationally, targeted for degradation through the proteasomal and lysosomal pathways in the presence of SUMO3.

The protein localises to the nucleus. It is found in the cytoplasm. It catalyses the reaction S-ubiquitinyl-[E2 ubiquitin-conjugating enzyme]-L-cysteine + [acceptor protein]-L-lysine = [E2 ubiquitin-conjugating enzyme]-L-cysteine + N(6)-ubiquitinyl-[acceptor protein]-L-lysine.. Functionally, E3 ubiquitin ligase that plays an important role in regulating cardiac development and contractility, muscle growth, metabolism, and fiber-type differentiation. Acts as a critical factor that regulates cardiomyocyte size during development in concert with TRIM63 by regulating E2F1-mediated gene expression. Plays a role in apoptosis induction in cardiomyocytes by promoting ubiquitination of the DUSP1 phosphatase. Promotes non-canonical NF-kappa-B signaling and B-cell-mediated immune responses by mediating NFKB2 'Lys-48'-linked ubiquitination and processing. In turn, NFKB2 is further processed by valosin-containing protein/VCP, an ATPase that mediates ubiquitin-dependent protein degradation by the proteasome. May play a role in preventing macrophages from producing inflammatory factors and migrating by downregulating the level of nuclear NF-kappa-B subunit RELA. Also modifies PPARG via polyubiquitination and accelerates PPARG proteasomal degradation to inhibit its activity. The polypeptide is Tripartite motif-containing protein 55 (Trim55) (Rattus norvegicus (Rat)).